Reading from the N-terminus, the 517-residue chain is Bifunctional purine biosynthesis protein PurH (517 aa).

Residues 1–151 (MTQERKIKRA…KNFAHVAVLC (151 aa)) form the MGS-like domain.

It belongs to the PurH family.

The catalysed reaction is (6R)-10-formyltetrahydrofolate + 5-amino-1-(5-phospho-beta-D-ribosyl)imidazole-4-carboxamide = 5-formamido-1-(5-phospho-D-ribosyl)imidazole-4-carboxamide + (6S)-5,6,7,8-tetrahydrofolate. It catalyses the reaction IMP + H2O = 5-formamido-1-(5-phospho-D-ribosyl)imidazole-4-carboxamide. Its pathway is purine metabolism; IMP biosynthesis via de novo pathway; 5-formamido-1-(5-phospho-D-ribosyl)imidazole-4-carboxamide from 5-amino-1-(5-phospho-D-ribosyl)imidazole-4-carboxamide (10-formyl THF route): step 1/1. It participates in purine metabolism; IMP biosynthesis via de novo pathway; IMP from 5-formamido-1-(5-phospho-D-ribosyl)imidazole-4-carboxamide: step 1/1. The chain is Bifunctional purine biosynthesis protein PurH from Elusimicrobium minutum (strain Pei191).